Here is a 726-residue protein sequence, read N- to C-terminus: MTNSKARYVLEPVQVTGTTFALNGTTLSYQFHVDEPSADLRSDHFGGSISGPIPVDPEPIVDGWTGMPDRVRREFPDQGRGDFRVPAFRIRQAEGHTVSAFRYREHEIVPGKEVSASGLPGVFGDAHDATTLIVRLVDPYSDLAAELKYTVFPKYDTVVRSASITNKSNSDVTIESLASLSVDFPFDELEMIGLRGDWAREAHRLRRKVDYGVQSFGSTTGFSSHLHNPFVALVHPSTTESQGEAWGFSLIYSGSFTINVEKSSQGLTRVSIGPSQLSWTLKPGETFDSPECVAVYSSTGIGGMSRSLHGLYRKHLMKSKFATEDRPVLLNSWEGLYFHIDQDRMYRLAQEAAALGVKLLVMDDGWFGDEHPRTSDDAGLGDWIPNPARFPDGLTPLVNRITALKVANSQRNMRFGIWVEPEMVNPRSTLYQQHPDWVLHAGNYPRTEQRNQLVLNMSLPEVQEFIISAMSEILNAADITYVKWDHNRGLAETPSPCANHAYMLGAYRVFDVLTTRFPNVIWEGCASGGGRFDPGILQYFPQVWTSDDSDAVERIFIQFGTSLAYPASAMGGHISSVPNHQTGRTTPLTFRAHVAMMCGSFGLELDPAHLTDSERRDIPGLIALAEKISPIVVKGDLWRLALPEDSNWPAALFLSENRTQGVLFFFQLAPMVNHSLPRVRLQGLEDGALYRVDGEGPYSGSMLMNLGLQYSFRGDYGSRLAFIERE.

N-linked (GlcNAc...) asparagine glycosylation is found at asparagine 23, asparagine 166, and asparagine 456. Catalysis depends on aspartate 485, which acts as the Nucleophile. Residue aspartate 547 is the Proton donor of the active site. Asparagine 657 and asparagine 673 each carry an N-linked (GlcNAc...) asparagine glycan.

It belongs to the glycosyl hydrolase 36 family. Homotetramer. It depends on Mg(2+) as a cofactor. NAD(+) serves as cofactor.

The protein resides in the secreted. The catalysed reaction is Hydrolysis of terminal, non-reducing alpha-D-galactose residues in alpha-D-galactosides, including galactose oligosaccharides, galactomannans and galactolipids.. In terms of biological role, hydrolyzes a variety of simple alpha-D-galactoside as well as more complex molecules such as oligosaccharides and polysaccharides. Not active on paranitrophenyl-alpha-galactoside and raffinose. This Emericella nidulans (strain FGSC A4 / ATCC 38163 / CBS 112.46 / NRRL 194 / M139) (Aspergillus nidulans) protein is Probable alpha-galactosidase G (aglG).